Here is a 143-residue protein sequence, read N- to C-terminus: Transcriptional regulator MraZ (143 aa).

SpoVT-AbrB domains follow at residues 5–47 (TFTP…PRNV) and 76–119 (ADEQ…NAES).

It belongs to the MraZ family. As to quaternary structure, forms oligomers.

The protein resides in the cytoplasm. Its subcellular location is the nucleoid. In Corynebacterium kroppenstedtii (strain DSM 44385 / JCM 11950 / CIP 105744 / CCUG 35717), this protein is Transcriptional regulator MraZ.